We begin with the raw amino-acid sequence, 232 residues long: Large ribosomal subunit protein uL10c (232 aa).

The N-terminal 52 residues, 1–52 (MESTLFLSKPLPTTIKTTTHSLSSVYPNPFKPNNLTFPRTTHKHPTTTTITA), are a transit peptide targeting the chloroplast.

This sequence belongs to the universal ribosomal protein uL10 family. Component of the chloroplast large ribosomal subunit (LSU). Mature 70S chloroplast ribosomes of higher plants consist of a small (30S) and a large (50S) subunit. The 30S small subunit contains 1 molecule of ribosomal RNA (16S rRNA) and 24 different proteins. The 50S large subunit contains 3 rRNA molecules (23S, 5S and 4.5S rRNA) and 33 different proteins.

The protein resides in the plastid. It is found in the chloroplast. Its function is as follows. Component of the chloroplast ribosome (chloro-ribosome), a dedicated translation machinery responsible for the synthesis of chloroplast genome-encoded proteins, including proteins of the transcription and translation machinery and components of the photosynthetic apparatus. In Spinacia oleracea (Spinach), this protein is Large ribosomal subunit protein uL10c (RPL10).